We begin with the raw amino-acid sequence, 570 residues long: Double-stranded RNA-binding protein Staufen homolog 2 (570 aa).

The DRBM 1 domain maps to 8–75 (TAMCLVNELA…ANKALTESTL (68 aa)). Disordered regions lie at residues 71 to 94 (TEST…PGSI) and 181 to 203 (NEPI…DDKD). The span at 83 to 94 (PKSNVNNNPGSI) shows a compositional bias: polar residues. Residues 95–181 (TPTVELNGLA…AMKALQALQN (87 aa)) enclose the DRBM 2 domain. Residue Ser-188 is modified to Phosphoserine. The segment covering 194 to 203 (SGKDVDDDKD) has biased composition (basic and acidic residues). DRBM domains lie at 207-274 (SEIS…ELKK) and 307-375 (NPIS…QLGY). 2 consecutive short sequence motifs (nuclear localization signal) follow at residues 273–291 (KKLP…FKKR) and 373–412 (LGYK…PKGI). A required for dendritic transport region spans residues 381 to 570 (LQDQLEKTGE…QDCKKSNSAV (190 aa)). Residues 387–409 (KTGENKGWSGPKPGFPEPTNNTP) form a disordered region. Phosphoserine is present on Ser-395. Thr-405 carries the phosphothreonine modification. 5 positions are modified to phosphoserine: Ser-416, Ser-426, Ser-440, Ser-455, and Ser-492. Residues 528 to 570 (DGAMNIEKGSLEKQAKHLREKADNNQAPPGSIAQDCKKSNSAV) are disordered. Basic and acidic residues predominate over residues 536 to 550 (GSLEKQAKHLREKAD).

As to quaternary structure, interacts with the exportin XPO5. This requires RNA and RAN bound to GTP. Interacts with microtubules. Isoform 2 and isoform 3 may also interact with ribosomes, and this association is independent of translation. Identified in a mRNP complex, at least composed of DHX9, DDX3X, ELAVL1, HNRNPU, IGF2BP1, ILF3, PABPC1, PCBP2, PTBP2, STAU1, STAU2, SYNCRIP and YBX1. Interacts with TRIM71 (via NHL repeats) in an RNA-dependent manner.

Its subcellular location is the cytoplasm. It localises to the nucleus. It is found in the nucleolus. The protein resides in the endoplasmic reticulum. Its function is as follows. RNA-binding protein required for the microtubule-dependent transport of neuronal RNA from the cell body to the dendrite. As protein synthesis occurs within the dendrite, the localization of specific mRNAs to dendrites may be a prerequisite for neurite outgrowth and plasticity at sites distant from the cell body. This Homo sapiens (Human) protein is Double-stranded RNA-binding protein Staufen homolog 2 (STAU2).